The sequence spans 322 residues: MNKKVALITTGGTIASRKTESGRLAAGAISGPELAEMCSLPEDVQIDVYPAFQLPSMHITFQHLLELKQTIERVFQDGGYDGAVVTHGTDTLEETAYFLDLTIEDERPVVVTGSQRAPEQQGTDAYTNIRHAVYTACSPDIKGAGTVVVFNERIFNARYVKKVHASNLQGFDVFGFGYLGIIDNDKVYVYQKLLKRDVHQLQRPLPAVDIVKCYLDGDGKFIRAAVREGVEGIVLEGVGRGQVPPNMMADIEQALNQGVYIVITTSAEEGEVYTTYDYAGSSYDLAKKGVILGKDYDSKKARMKLAVLLASYKEGIKDKFCY.

The Asparaginase/glutaminase domain maps to 3-322 (KKVALITTGG…KEGIKDKFCY (320 aa)). The O-isoaspartyl threonine intermediate role is filled by Thr13. Substrate-binding positions include Ser56 and 89–90 (TD).

This sequence belongs to the asparaginase 1 family. In terms of assembly, homotetramer.

It localises to the cytoplasm. It carries out the reaction L-asparagine + H2O = L-aspartate + NH4(+). This chain is L-asparaginase (ansA), found in Bacillus licheniformis.